The following is a 102-amino-acid chain: uncharacterized protein (102 aa).

2 helical membrane-spanning segments follow: residues 33–55 and 57–79; these read VLEL…LVVL and VVGV…VVVA.

Its subcellular location is the membrane. This is an uncharacterized protein from Saccharomyces cerevisiae (strain ATCC 204508 / S288c) (Baker's yeast).